The chain runs to 423 residues: UDP-N-acetylglucosamine 1-carboxyvinyltransferase 2 (423 aa).

A phosphoenolpyruvate-binding site is contributed by 23 to 24 (KN). R93 contacts UDP-N-acetyl-alpha-D-glucosamine. C117 serves as the catalytic Proton donor. C117 bears the 2-(S-cysteinyl)pyruvic acid O-phosphothioketal mark. Residues 122–126 (RPIDQ), D305, and I327 contribute to the UDP-N-acetyl-alpha-D-glucosamine site.

This sequence belongs to the EPSP synthase family. MurA subfamily.

The protein resides in the cytoplasm. The catalysed reaction is phosphoenolpyruvate + UDP-N-acetyl-alpha-D-glucosamine = UDP-N-acetyl-3-O-(1-carboxyvinyl)-alpha-D-glucosamine + phosphate. It functions in the pathway cell wall biogenesis; peptidoglycan biosynthesis. In terms of biological role, cell wall formation. Adds enolpyruvyl to UDP-N-acetylglucosamine. This chain is UDP-N-acetylglucosamine 1-carboxyvinyltransferase 2, found in Listeria monocytogenes serovar 1/2a (strain ATCC BAA-679 / EGD-e).